Reading from the N-terminus, the 436-residue chain is Protein translocase subunit SecY (436 aa).

The next 10 helical transmembrane spans lie at 19-39 (ILFT…TVPG), 68-88 (FSVF…VQLL), 116-136 (YISL…FNAL), 151-171 (LFIG…GEQI), 179-199 (GVSM…VKGI), 216-236 (IIFV…TTYV), 269-289 (VIPV…LQFL), 313-333 (GIAM…FVQI), 372-392 (VGSL…DLFG), and 395-415 (DTVA…IEGM).

This sequence belongs to the SecY/SEC61-alpha family. In terms of assembly, component of the Sec protein translocase complex. Heterotrimer consisting of SecY, SecE and SecG subunits. The heterotrimers can form oligomers, although 1 heterotrimer is thought to be able to translocate proteins. Interacts with the ribosome. Interacts with SecDF, and other proteins may be involved. Interacts with SecA.

Its subcellular location is the cell membrane. Functionally, the central subunit of the protein translocation channel SecYEG. Consists of two halves formed by TMs 1-5 and 6-10. These two domains form a lateral gate at the front which open onto the bilayer between TMs 2 and 7, and are clamped together by SecE at the back. The channel is closed by both a pore ring composed of hydrophobic SecY resides and a short helix (helix 2A) on the extracellular side of the membrane which forms a plug. The plug probably moves laterally to allow the channel to open. The ring and the pore may move independently. In Streptococcus gordonii (strain Challis / ATCC 35105 / BCRC 15272 / CH1 / DL1 / V288), this protein is Protein translocase subunit SecY.